Here is a 132-residue protein sequence, read N- to C-terminus: UPF0102 protein Achl_2213 (132 aa).

This sequence belongs to the UPF0102 family.

The sequence is that of UPF0102 protein Achl_2213 from Pseudarthrobacter chlorophenolicus (strain ATCC 700700 / DSM 12829 / CIP 107037 / JCM 12360 / KCTC 9906 / NCIMB 13794 / A6) (Arthrobacter chlorophenolicus).